The primary structure comprises 137 residues: Putative protein YjhV (137 aa).

A compositionally biased stretch (polar residues) spans 1 to 16; sequence MVGYHQTNQKTDTGKT. The segment at 1 to 20 is disordered; sequence MVGYHQTNQKTDTGKTLTRR.

The chain is Putative protein YjhV (yjhV) from Escherichia coli (strain K12).